A 78-amino-acid chain; its full sequence is Large ribosomal subunit protein bL28 (78 aa).

The protein belongs to the bacterial ribosomal protein bL28 family.

The polypeptide is Large ribosomal subunit protein bL28 (Microcystis aeruginosa (strain NIES-843 / IAM M-2473)).